The primary structure comprises 117 residues: Large ribosomal subunit protein uL22 (117 aa).

It belongs to the universal ribosomal protein uL22 family. In terms of assembly, part of the 50S ribosomal subunit.

Functionally, this protein binds specifically to 23S rRNA; its binding is stimulated by other ribosomal proteins, e.g. L4, L17, and L20. It is important during the early stages of 50S assembly. It makes multiple contacts with different domains of the 23S rRNA in the assembled 50S subunit and ribosome. In terms of biological role, the globular domain of the protein is located near the polypeptide exit tunnel on the outside of the subunit, while an extended beta-hairpin is found that lines the wall of the exit tunnel in the center of the 70S ribosome. The chain is Large ribosomal subunit protein uL22 from Staphylococcus epidermidis (strain ATCC 35984 / DSM 28319 / BCRC 17069 / CCUG 31568 / BM 3577 / RP62A).